We begin with the raw amino-acid sequence, 473 residues long: TOX high mobility group box family member 2 (473 aa).

Disordered regions lie at residues 1-42 (MSDG…SLLH), 139-211 (GLRS…VSAY), 277-302 (SKSP…PPKQ), and 340-473 (LLPG…PSAR). Positions 8-20 (LLSTSQTYNSQGE) are enriched in polar residues. A required for transcriptional activation region spans residues 25–63 (YEIPPITPPNLPEPSLLHLGDHEAGYHSLCHGLAPNGLL). Residues 153–164 (GSKSATPSPSSS) are compositionally biased toward low complexity. A compositionally biased stretch (basic and acidic residues) spans 171–188 (DAHFKISGEKRPSTDPGK). The Nuclear localization signal signature appears at 172–201 (AHFKISGEKRPSTDPGKKAKNPKKKKKKDP). Basic residues predominate over residues 189 to 199 (KAKNPKKKKKK). Positions 204–272 (PQKPVSAYAL…EYLKALAAYR (69 aa)) form a DNA-binding region, HMG box. 2 stretches are compositionally biased toward low complexity: residues 373 to 382 (LLSPPLSMSP) and 415 to 440 (SDFP…WDGS). A compositionally biased stretch (polar residues) spans 463–473 (SPKNLQEPSAR).

Highly expressed in ovary, where it is restricted to undifferentiated granulosa cells. Expressed in hypothalamus, pituitary gland, testis and uterus.

It localises to the nucleus. In terms of biological role, putative transcriptional activator involved in the hypothalamo-pituitary-gonadal system. The chain is TOX high mobility group box family member 2 (Tox2) from Rattus norvegicus (Rat).